Here is a 473-residue protein sequence, read N- to C-terminus: Lactate utilization protein B (473 aa).

2 4Fe-4S ferredoxin-type domains span residues 302–332 and 351–380; these read GSEF…GHSY and YDDY…LHDL. Residues C311, C314, C317, C321, C364, C367, and C371 each contribute to the [4Fe-4S] cluster site.

Belongs to the LutB/YkgF family.

Is involved in L-lactate degradation and allows cells to grow with lactate as the sole carbon source. Has probably a role as an electron transporter during oxidation of L-lactate. This is Lactate utilization protein B from Bacillus anthracis (strain A0248).